Reading from the N-terminus, the 585-residue chain is A-type ATP synthase subunit A (585 aa).

Residue 231–238 (GPFGSGKT) participates in ATP binding.

Belongs to the ATPase alpha/beta chains family. Has multiple subunits with at least A(3), B(3), C, D, E, F, H, I and proteolipid K(x).

The protein resides in the cell membrane. The enzyme catalyses ATP + H2O + 4 H(+)(in) = ADP + phosphate + 5 H(+)(out). In terms of biological role, component of the A-type ATP synthase that produces ATP from ADP in the presence of a proton gradient across the membrane. The A chain is the catalytic subunit. The sequence is that of A-type ATP synthase subunit A from Desulfurococcus sp. (strain SY).